We begin with the raw amino-acid sequence, 130 residues long: Small ribosomal subunit protein uS9 (130 aa).

It belongs to the universal ribosomal protein uS9 family.

This chain is Small ribosomal subunit protein uS9, found in Streptococcus mutans serotype c (strain ATCC 700610 / UA159).